Reading from the N-terminus, the 502-residue chain is MVLTTTSIRDSEESLHCTFASRYVQEPLPKFKMPKKSMPKEAAYQIVNDELMLDGNPRLNLASFVSTWMEPECDKLIMSSINKNYVDMDEYPVTTELQNRCVNMLAHLFHAPVGDDETAVGVGTVGSSEAIMLAGLAFKRKWQSKRKAEGKPFDKPNIVTGANVQVCWEKFARYFEVELKEVKLKEGYYVMDPAKAVEIVDENTICVAAILGSTLTGEFEDVKLLNELLTKKNKETGWETPIHVDAASGGFIAPFLWPDLEWDFRLPLVKSINVSGHKYGLVYAGVGWVIWRSKEDLPDELVFHINYLGSDQPTFTLNFSKGSYQIIAQYYQLIRLGFEGYKNVMKNCLSNAKVLTEGITKMGRFDIVSKDVGVPVVAFSLRDSSKYTVFEVSEHLRRFGWIVPAYTMPPDAEHIAVLRVVIREDFSHSLAERLVSDIEKILSELDTQPPRLPTKAVRVTAEEVRDDKGDGLHHFHMDTVETQKDIIKHWRKIAGKKTSGVC.

At Lys278 the chain carries N6-(pyridoxal phosphate)lysine. The calmodulin-binding stretch occupies residues 471-502 (GLHHFHMDTVETQKDIIKHWRKIAGKKTSGVC).

Belongs to the group II decarboxylase family. Pyridoxal 5'-phosphate serves as cofactor.

It catalyses the reaction L-glutamate + H(+) = 4-aminobutanoate + CO2. Catalyzes the production of GABA. The calmodulin-binding is calcium-dependent and it is proposed that this may, directly or indirectly, form a calcium regulated control of GABA biosynthesis. The sequence is that of Glutamate decarboxylase from Solanum lycopersicum (Tomato).